The primary structure comprises 121 residues: Neuropeptide-like protein 7 (121 aa).

An N-terminal signal peptide occupies residues 1–22 (MYIKAALLIVVLFGVASQITSA).

In terms of biological role, may regulate lifespan in response to food availability and oxidative stress. This is Neuropeptide-like protein 7 from Caenorhabditis elegans.